Here is a 162-residue protein sequence, read N- to C-terminus: Peptide methionine sulfoxide reductase MsrA (162 aa).

Cys-16 is a catalytic residue.

Belongs to the MsrA Met sulfoxide reductase family.

It carries out the reaction L-methionyl-[protein] + [thioredoxin]-disulfide + H2O = L-methionyl-(S)-S-oxide-[protein] + [thioredoxin]-dithiol. The enzyme catalyses [thioredoxin]-disulfide + L-methionine + H2O = L-methionine (S)-S-oxide + [thioredoxin]-dithiol. Functionally, has an important function as a repair enzyme for proteins that have been inactivated by oxidation. Catalyzes the reversible oxidation-reduction of methionine sulfoxide in proteins to methionine. The sequence is that of Peptide methionine sulfoxide reductase MsrA from Geobacter metallireducens (strain ATCC 53774 / DSM 7210 / GS-15).